Consider the following 675-residue polypeptide: G-protein coupled receptor moody (675 aa).

Topologically, residues 1–44 are extracellular; the sequence is MSDETTGSLGDAFSPMDTPTTTIMPPPADVDESGFSHSLLTFAA. A helical membrane pass occupies residues 45-65; that stretch reads VMTFLIMIVGICGNLLTVVAL. Residues 66–73 are Cytoplasmic-facing; that stretch reads LKCPKVRN. The chain crosses the membrane as a helical span at residues 74–94; sequence VAAAFIISLCIADLLFCALVL. The Extracellular portion of the chain corresponds to 95–115; it reads PFQGLRFVQGTWRHGEVLCRL. The cysteines at positions 113 and 192 are disulfide-linked. The chain crosses the membrane as a helical span at residues 116–136; it reads IPFIQYGNIGVSLLCIAMITI. Over 137-156 the chain is Cytoplasmic; the sequence is NRYVMITHYSLYNRIYKRHW. Residues 157 to 177 form a helical membrane-spanning segment; the sequence is IAIMIAACWLFSYGMQLPTLL. Residues 178–206 are Extracellular-facing; that stretch reads GAWGRFGYDARLQTCSIMSDRHGHSSKTT. Residues 207–227 form a helical membrane-spanning segment; the sequence is LFITAFVIPCLVIIACYAKIF. Residues 228–327 lie on the Cytoplasmic side of the membrane; the sequence is WVVHKSEQRL…AKRNEWRITK (100 aa). Positions 258 to 316 are disordered; it reads TSMPSGDGANPSQVPAGCRVSSDSSSNYSTDVPDTTPGGAGGGAGVKQQPSRVKDQREV. Positions 278 to 294 are enriched in low complexity; sequence SSDSSSNYSTDVPDTTP. A helical membrane pass occupies residues 328–348; that stretch reads MVLAIFLSFVICYLPITIVKV. Topologically, residues 349–359 are extracellular; that stretch reads ADKDVEHPSLH. A helical transmembrane segment spans residues 360-380; sequence IFSYIMLYLSACINPIIYVIM. The Cytoplasmic portion of the chain corresponds to 381-675; sequence NKQYRKAYKT…LMDKKKFPKD (295 aa). Disordered regions lie at residues 475-568 and 588-675; these read SKSS…GNGS and LPPT…FPKD. Residues 536-551 show a composition bias toward low complexity; the sequence is SSVISANPSSSPSPSS. Residues 552–565 are compositionally biased toward gly residues; that stretch reads SGGGIYRPGIGSMG. The span at 666-675 shows a compositional bias: basic and acidic residues; the sequence is LMDKKKFPKD.

The protein belongs to the G-protein coupled receptor 1 family.

It is found in the cell membrane. Functionally, required in glia to regulate the acute sensitivity to cocaine and to continuously maintain the proper blood-brain barrier (BBB) function. A moody-mediated signaling pathway functions in glia to regulate nervous system insulation and drug-related behaviors. The sequence is that of G-protein coupled receptor moody from Drosophila pseudoobscura pseudoobscura (Fruit fly).